The following is an 82-amino-acid chain: UPF0729 protein C18orf32 homolog (82 aa).

The segment at 1–37 (MVCIPCIVIPVLLWVYKKFLEPIVYPFISPIINRIWP) is necessary for its localzation to the endoplasmic reticulum and lipid droplets. Residues 46–82 (TSAKKEESNGTCKASGTSITNGSVSRGEEAVPDKKTD) are disordered. Polar residues predominate over residues 54–69 (NGTCKASGTSITNGSV). Residues 71–82 (RGEEAVPDKKTD) show a composition bias toward basic and acidic residues.

Belongs to the UPF0729 family.

Its subcellular location is the endoplasmic reticulum. The protein localises to the lipid droplet. This is UPF0729 protein C18orf32 homolog from Xenopus tropicalis (Western clawed frog).